The chain runs to 186 residues: MLMLASASPARHRLLQQALIPHQVMVSGVDEETIHHLDPVRLVQHLAEAKAGVVRQQIEAALPVLGCDSVLEFDGTVFGKPATAVEASSRWQRMAGAWGLLHTGHCLLSVNGERLSETVTTRVLFSALSDSEIEAYVATGEPLLCAGGFALEGQGGLMVERLEGCFSNVIGLSLPLLRRWLLVINE.

Asp68 serves as the catalytic Proton acceptor.

Belongs to the Maf family. A divalent metal cation is required as a cofactor.

The protein resides in the cytoplasm. It carries out the reaction a ribonucleoside 5'-triphosphate + H2O = a ribonucleoside 5'-phosphate + diphosphate + H(+). The enzyme catalyses a 2'-deoxyribonucleoside 5'-triphosphate + H2O = a 2'-deoxyribonucleoside 5'-phosphate + diphosphate + H(+). Nucleoside triphosphate pyrophosphatase. May have a dual role in cell division arrest and in preventing the incorporation of modified nucleotides into cellular nucleic acids. The chain is Nucleoside triphosphate pyrophosphatase from Prochlorococcus marinus (strain MIT 9303).